Here is a 1363-residue protein sequence, read N- to C-terminus: Xanthine dehydrogenase (1363 aa).

The 87-residue stretch at 35–121 (DTIRFYLNGT…GKHVITVEGI (87 aa)) folds into the 2Fe-2S ferredoxin-type domain. Residues Cys-73, Cys-78, Cys-81, Cys-103, Cys-142, Cys-145, Cys-177, and Cys-179 each coordinate [2Fe-2S] cluster. Positions 266–450 (FGNKRKKWYR…SSLRIPTASE (185 aa)) constitute an FAD-binding PCMH-type domain. FAD-binding positions include 294–301 (LIGGSTET), Phe-374, 384–388 (SPAGN), Asp-397, and Lys-459. Residues Gln-798 and Phe-829 each coordinate Mo-molybdopterin. 2 residues coordinate substrate: Glu-833 and Arg-911. Mo-molybdopterin is bound at residue Arg-943. Phe-945 and Thr-1041 together coordinate substrate. Residue Ala-1110 coordinates Mo-molybdopterin. Glu-1295 functions as the Proton acceptor in the catalytic mechanism.

It belongs to the xanthine dehydrogenase family. The cofactor is FAD. Mo-molybdopterin is required as a cofactor. [2Fe-2S] cluster serves as cofactor.

It localises to the peroxisome. It carries out the reaction xanthine + NAD(+) + H2O = urate + NADH + H(+). It catalyses the reaction hypoxanthine + NAD(+) + H2O = xanthine + NADH + H(+). In terms of biological role, key enzyme in purine degradation. Catalyzes the oxidation of hypoxanthine to xanthine. Catalyzes the oxidation of xanthine to uric acid. The polypeptide is Xanthine dehydrogenase (hxA) (Emericella nidulans (strain FGSC A4 / ATCC 38163 / CBS 112.46 / NRRL 194 / M139) (Aspergillus nidulans)).